Reading from the N-terminus, the 622-residue chain is Probable ATP-dependent RNA helicase DDX41 (622 aa).

Positions 1 to 15 (MEDSEPERKRARADE) are enriched in basic and acidic residues. 2 disordered regions span residues 1 to 39 (MEDS…YVPL) and 51 to 84 (LQRR…PQSN). Position 4 is a phosphoserine (S4). K9 bears the N6-acetyllysine mark. K9 participates in a covalent cross-link: Glycyl lysine isopeptide (Lys-Gly) (interchain with G-Cter in ubiquitin). Phosphoserine occurs at positions 21 and 23. Over residues 24–33 (EDEDEDDEDY) the composition is skewed to acidic residues. Phosphotyrosine is present on Y33. Residue K115 forms a Glycyl lysine isopeptide (Lys-Gly) (interchain with G-Cter in ubiquitin) linkage. The Q motif motif lies at 181–209 (KSFKEMKFPAAILRGLKKKGILHPTPIQI). The region spanning 212–396 (IPTILSGRDM…KSALVKPVTI (185 aa)) is the Helicase ATP-binding domain. 225–232 (AFTGSGKT) contacts ATP. The DEAD box signature appears at 344 to 347 (DEAD). Residues 407 to 567 (DVIQEVEYVK…KVPPVLQVLH (161 aa)) form the Helicase C-terminal domain. Residue Y414 is modified to Phosphotyrosine. Glycyl lysine isopeptide (Lys-Gly) (interchain with G-Cter in SUMO2) cross-links involve residues K416 and K442. The CCHC-type zinc finger occupies 580–597 (RGCAFCGGLGHRITDCPK).

Belongs to the DEAD box helicase family. DDX41 subfamily. In terms of assembly, identified in the spliceosome C complex. Interacts with ERCC6. Interacts with FAM50A. Interacts with STING1. Interacts with CGAS. Interacts with several spliceosomes components such as PRP19 or CDC5L. In terms of processing, acetylation at Lys-9 regulates the nuclear/cytoplasmic localization. Post-translationally, phosphorylated by BTK; phosphorylation induces binding to dsDNA and STING1. 'Lys-48'-linked ubiquitinated and degraded by TRIM21 leading to negative regulation of the innate immune response to intracellular dsDNA.

Its subcellular location is the nucleus. It is found in the cytoplasm. It catalyses the reaction ATP + H2O = ADP + phosphate + H(+). Functionally, multifunctional protein that participates in many aspects of cellular RNA metabolism. Plays pivotal roles in innate immune sensing and hematopoietic homeostasis. Recognizes foreign or self-nucleic acids generated during microbial infection, thereby initiating anti-pathogen responses. Mechanistically, phosphorylation by BTK allows binding to dsDNA leading to interaction with STING1. Modulates the homeostasis of dsDNA through its ATP-dependent DNA-unwinding activity and ATP-independent strand-annealing activity. In turn, induces STING1-mediated type I interferon and cytokine responses to DNA and DNA viruses. During murine leukemia virus infection, primarily senses the DNA/RNA hybrid generated at the first step of reverse transcription, while cGAS recognizes dsDNA generated at the next step and both are needed for the antiretroviral innate immune response. Selectively modulates the transcription of certain immunity-associated genes by regulating their alternative splicing. Binds to RNA (R)-loops, structures consisting of DNA/RNA hybrids and a displaced strand of DNA that occur during transcription, and prevents their accumulation, thereby maintaining genome stability. Also participates in pre-mRNA splicing, translational regulation and snoRNA processing, which is essential for ribosome biogenesis. This Mus musculus (Mouse) protein is Probable ATP-dependent RNA helicase DDX41 (Ddx41).